Consider the following 155-residue polypeptide: MKTYSAKPSEIEKKWWVIDAKNIVLGRLASRVANMLRGKHKPSFTPHLDCGDNIIIINAEHVNLTGKKANPKDGKIYYRYTGFPGGIKDTTAGKILSGKHPERVIKMAVKRMITRNALGAKQMSNLYVYANGDHPHMAQQPTVYDFASQNPKNKK.

The protein belongs to the universal ribosomal protein uL13 family. Part of the 50S ribosomal subunit.

This protein is one of the early assembly proteins of the 50S ribosomal subunit, although it is not seen to bind rRNA by itself. It is important during the early stages of 50S assembly. This chain is Large ribosomal subunit protein uL13, found in Rickettsia rickettsii (strain Iowa).